The chain runs to 301 residues: Putative S-adenosyl-L-methionine-dependent methyltransferase MAP_3777 (301 aa).

S-adenosyl-L-methionine-binding positions include Asp-126 and 155-156 (DL).

The protein belongs to the UPF0677 family.

In terms of biological role, exhibits S-adenosyl-L-methionine-dependent methyltransferase activity. This Mycolicibacterium paratuberculosis (strain ATCC BAA-968 / K-10) (Mycobacterium paratuberculosis) protein is Putative S-adenosyl-L-methionine-dependent methyltransferase MAP_3777.